Consider the following 2066-residue polypeptide: Kinesin-like protein KIN-12C (2066 aa).

Disordered stretches follow at residues 1–41 (MSRN…SQIQ) and 59–116 (RAQH…RVSL). The span at 20–33 (SLSLFSPSRPPLNS) shows a compositional bias: low complexity. Basic and acidic residues predominate over residues 67–76 (GPEKKFEVLE). Positions 99–109 (EPNSAQSTPTR) are enriched in polar residues. One can recognise a Kinesin motor domain in the interval 168–505 (NVQVLIRLRP…LKFAQRAKLI (338 aa)). Residue 249–256 (GQTGSGKT) coordinates ATP. Microtubules-binding stretches follow at residues 375 to 379 (SSRSH), 406 to 412 (VDLAGSE), and 454 to 458 (HVPYR). 2 coiled-coil regions span residues 1521 to 1618 (DLKT…VDEI) and 1650 to 1772 (KIYA…EILL). Disordered stretches follow at residues 1803 to 1823 (SAAE…RGSS) and 2043 to 2066 (KYRK…TRYR). Positions 1905 to 2051 (VQRVVEKAQQ…AKYRKTSNNH (147 aa)) form a coiled coil. Over residues 2047–2066 (TSNNHPSTRTQGQSSGTRYR) the composition is skewed to polar residues.

It belongs to the TRAFAC class myosin-kinesin ATPase superfamily. Kinesin family. KIN-12 subfamily. In terms of assembly, interacts with TAN. Interacts with RANGAP1. In terms of tissue distribution, expressed in tissues enriched in dividing cells, such as root meristems, root primordia, and leaf primordia/young leaves.

Its subcellular location is the cytoplasm. It is found in the cytoskeleton. The protein localises to the phragmoplast. Involved in the spatial control of cytokinesis by a proper phragmoplast guidance. Localizes TAN to the cortical division sites (CDS) during cytokinesis via direct binding. In Arabidopsis thaliana (Mouse-ear cress), this protein is Kinesin-like protein KIN-12C.